The sequence spans 1029 residues: Probable E3 ubiquitin protein ligase C167.07c (1029 aa).

The IQ domain maps to 46-75 (AENNSVAVQSLSRGFLARRKFKQDFRERWI). The HECT domain occupies 692–1029 (FGKLLKGPIR…VRSGVGFGFS (338 aa)). The active-site Glycyl thioester intermediate is Cys-997.

It is found in the cytoplasm. It localises to the nucleus. The enzyme catalyses S-ubiquitinyl-[E2 ubiquitin-conjugating enzyme]-L-cysteine + [acceptor protein]-L-lysine = [E2 ubiquitin-conjugating enzyme]-L-cysteine + N(6)-ubiquitinyl-[acceptor protein]-L-lysine.. Its function is as follows. Probable E3 ubiquitin-protein ligase which mediates ubiquitination and subsequent proteasomal degradation of target proteins. The sequence is that of Probable E3 ubiquitin protein ligase C167.07c from Schizosaccharomyces pombe (strain 972 / ATCC 24843) (Fission yeast).